Here is a 1862-residue protein sequence, read N- to C-terminus: Chitin synthase V (1862 aa).

Residues 1-26 (MAMSLPQLGGAGGPHTQPSLPSLPAH) form a disordered region. The Myosin motor domain occupies 1–778 (MAMSLPQLGG…CWMEIAQLGE (778 aa)). Asn-63 carries N-linked (GlcNAc...) asparagine glycosylation. Position 104-111 (104-111 (GESGAGKS)) interacts with ATP. Asn-123, Asn-429, Asn-483, Asn-522, and Asn-560 each carry an N-linked (GlcNAc...) asparagine glycan. Residues 592 to 643 (TVSSKPMRAPSVMSRKTHRTGRPSTAYKRQQQEAMEELDQQSQAGESKKNAK) are disordered. The actin-binding stretch occupies residues 658–682 (LDNVQKAVTDPGTNSYFVFCLKPND). 2 helical membrane-spanning segments follow: residues 884–904 (WVAL…RLIG) and 923–943 (MLIW…PMLI). Positions 947–1009 (QYVYSSNELS…YAGKDISALF (63 aa)) constitute a Cytochrome b5 heme-binding domain. N-linked (GlcNAc...) asparagine glycans are attached at residues Asn-1036, Asn-1063, and Asn-1192. Residues 1202–1222 (FILAISVMLASILVFKFLAAL) form a helical membrane-spanning segment. Residues Asn-1459 and Asn-1565 are each glycosylated (N-linked (GlcNAc...) asparagine). The next 3 membrane-spanning stretches (helical) occupy residues 1590-1610 (FVVF…MYIV), 1623-1643 (VPIT…VIFI), and 1650-1670 (MVGW…GLPL). Asn-1771 is a glycosylation site (N-linked (GlcNAc...) asparagine). Residues 1804-1859 (MPSDDALLAEIRDILKTADLMTVTKKGIKQELERRFNVPLDAKRAYINSATEALLS) enclose the DEK-C domain.

In the N-terminal section; belongs to the TRAFAC class myosin-kinesin ATPase superfamily. Myosin family. It in the C-terminal section; belongs to the chitin synthase family. Class V subfamily.

It localises to the cell membrane. It catalyses the reaction [(1-&gt;4)-N-acetyl-beta-D-glucosaminyl](n) + UDP-N-acetyl-alpha-D-glucosamine = [(1-&gt;4)-N-acetyl-beta-D-glucosaminyl](n+1) + UDP + H(+). In terms of biological role, polymerizes chitin, a structural polymer of the cell wall and septum, by transferring the sugar moiety of UDP-GlcNAc to the non-reducing end of the growing chitin polymer. ChsV and chsVb do perform additive, but not redundant, functions in septum formation. Involved in cell wall integrity and resistance to antimicrobial plant defense compounds such as the tomato phytoanticipin alpha-tomatine or H(2)O(2), and plays a crucial role in vascular colonization and pathogenicity. Also plays an important role in nuclear sorting or distribution. In Fusarium oxysporum f. sp. lycopersici (strain 4287 / CBS 123668 / FGSC 9935 / NRRL 34936) (Fusarium vascular wilt of tomato), this protein is Chitin synthase V.